Consider the following 354-residue polypeptide: E2F transcription factor-like E2FF (354 aa).

The DNA-binding element occupies 21–86; the sequence is RKEKSLGVLV…RGKNQYSWKG (66 aa). Residues 104 to 143 are disordered; that stretch reads ERLGYSSSNNSDKVSNGCEREEPLTLTPDDQENSSSSKMD. Over residues 108–117 the composition is skewed to polar residues; it reads YSSSNNSDKV. Residues 145–225 mediate DNA binding; sequence KKEKSLWLLA…TRKPAYRWLG (81 aa).

This sequence belongs to the E2F/DP family. High expression in young cotyledons and leaves, hypocotyls, shoot apical meristem, roots and mature pollen grains, moderate in developing trichomes, flowers and at early stages of developing anthers, and barely detectable in mature leaves. Not detected in primary root meristem, emerging lateral roots, pistils, developing embryos and siliques.

It is found in the nucleus. Its subcellular location is the cytoplasm. Its function is as follows. Inhibitor of E2F-dependent activation of gene expression. Binds specifically the E2 recognition site without interacting with DP proteins and prevents transcription activation by E2F/DP heterodimers. Does not bind retinoblastoma-related proteins. Acts as a growth regulator but is not associated with changes in the expression of cell cycle marker genes or in nuclear ploidy levels. Has no effect on cell proliferation, but may repress cell wall biosynthesis genes during cell elongation in differentiated cells. The sequence is that of E2F transcription factor-like E2FF (E2FF) from Arabidopsis thaliana (Mouse-ear cress).